Here is a 1435-residue protein sequence, read N- to C-terminus: Trafficking protein particle complex subunit 8 (1435 aa).

Phosphoserine is present on residues Ser273, Ser279, and Ser309. A disordered region spans residues 301–321 (QLEQSSDPSNSIDGPDHLRSA). The span at 302–312 (LEQSSDPSNSI) shows a compositional bias: polar residues.

The protein belongs to the TRS85 family. In terms of assembly, component of the multisubunit TRAPP (transport protein particle) complex, which includes TRAPPC2, TRAPPC2L, TRAPPC3, TRAPPC3L, TRAPPC4, TRAPPC5, TRAPPC8, TRAPPC9, TRAPPC10, TRAPPC11 and TRAPPC12. Interacts with TBC1D14. Interacts (via C-terminus) with TMEM131 (via C-terminus); the interaction is direct and is involved in collagen secretion.

The protein resides in the golgi apparatus. The protein localises to the cis-Golgi network. In terms of biological role, plays a role in endoplasmic reticulum to Golgi apparatus trafficking at a very early stage. Maintains together with TBC1D14 the cycling pool of ATG9 required for initiation of autophagy. Involved in collagen secretion. The chain is Trafficking protein particle complex subunit 8 (TRAPPC8) from Homo sapiens (Human).